The chain runs to 62 residues: Protein DsrB (62 aa).

It belongs to the DsrB family.

The sequence is that of Protein DsrB from Enterobacter sp. (strain 638).